The primary structure comprises 271 residues: Small ribosomal subunit protein uS2 (271 aa).

Positions 235 to 271 (FDAKNPLKPQNYNAPNKRPYQDSPRKPSYQNQNQNQI) are disordered. A compositionally biased stretch (polar residues) spans 262-271 (SYQNQNQNQI).

It belongs to the universal ribosomal protein uS2 family.

The sequence is that of Small ribosomal subunit protein uS2 from Onion yellows phytoplasma (strain OY-M).